Consider the following 154-residue polypeptide: Endoribonuclease YbeY (154 aa).

The Zn(2+) site is built by His113, His117, and His123.

It belongs to the endoribonuclease YbeY family. It depends on Zn(2+) as a cofactor.

It is found in the cytoplasm. Functionally, single strand-specific metallo-endoribonuclease involved in late-stage 70S ribosome quality control and in maturation of the 3' terminus of the 16S rRNA. This is Endoribonuclease YbeY from Vibrio vulnificus (strain CMCP6).